Consider the following 140-residue polypeptide: Con-Ins Im2 (140 aa).

Positions 1-29 (MALTWPSSPPVLLTLLLSLLALQLCAVYG) are cleaved as a signal peptide. Intrachain disulfides connect C35–C123, C50–C126, C62–C139, and C125–C130. The propeptide at 64-110 (PRGYVSNWFTKRSAPNKPAETFVDQNLRGVLLNKREALSYLRPREPR) is c peptide. E134 is modified (4-carboxyglutamate; partial).

It belongs to the insulin family. Heterodimer of A and B chains; disulfide-linked. As to expression, expressed by the venom gland.

It is found in the secreted. This venom insulin facilitates prey capture by rapidly inducing hypoglycemic shock. Intraperitoneal injection of this peptide into zebrafish lowers blood glucose with the same potency than human insulin. In vivo, when applied to water, this peptide reduces overall locomotor activity of zebrafish larvae, observed as a significant decrease in the percentage of time spent swimming and movement frequency. The protein is Con-Ins Im2 of Conus imperialis (Imperial cone).